The primary structure comprises 398 residues: Serine/threonine-protein phosphatase 2A activator (398 aa).

Residues arginine 137, threonine 142, and glycine 143 each coordinate ATP. Mg(2+) is bound by residues glycine 197 and aspartate 203. ATP contacts are provided by proline 293, glutamine 296, and histidine 297. Residues 343–352 are compositionally biased toward pro residues; sequence PVATAPPPPA. The tract at residues 343–398 is disordered; sequence PVATAPPPPAESLSIEQNVGDSSSESSDNSVVLRPSTSSSSLVAAAEGSGDKPSKE. The span at 363 to 388 shows a compositional bias: low complexity; that stretch reads DSSSESSDNSVVLRPSTSSSSLVAAA.

It belongs to the PTPA-type PPIase family. Associates with PP2A heterodimeric core enzyme PP2A(D), composed of a catalytic subunit (subunit C) and a constant regulatory subunit (PR65 or subunit A). Interacts with the catalytic subunit Pp4-19C of the serine/threonine-protein phosphatase 4 (PP4) complex; thereby mediating basal localization of the Miranda (Mira) complex; probably by facilitating the dephosphorylation of Mira.

It is found in the cytoplasm. The protein localises to the nucleus. It carries out the reaction [protein]-peptidylproline (omega=180) = [protein]-peptidylproline (omega=0). PPIases accelerate the folding of proteins. It catalyzes the cis-trans isomerization of proline imidic peptide bonds in oligopeptides. Acts as a regulatory subunit for serine/threonine-protein phosphatase 2A (PP2A). Modulates PP2A activity or substrate specificity, probably by inducing a conformational change in the catalytic subunit, a proposed direct target of the PPIase. Acts as mediator for the basal localization of the Miranda (Mira) complex during mitosis of larval neuroblast asymmetric division. Associates with the phosphatase 4 (PP4) complex to mediate basal localization of Mira; probably by facilitating the dephosphorylation of Mira. Cortical association of Mira mediated by the PTPA-PP4 complex seems to be independent of aPKC activity. This Drosophila melanogaster (Fruit fly) protein is Serine/threonine-protein phosphatase 2A activator.